Here is a 320-residue protein sequence, read N- to C-terminus: ATP-dependent 6-phosphofructokinase (320 aa).

An ATP-binding site is contributed by G11. 21 to 25 (RAVVR) serves as a coordination point for ADP. ATP is bound by residues 72–73 (RC) and 102–105 (GDGS). D103 lines the Mg(2+) pocket. 125-127 (TID) is a binding site for substrate. D127 acts as the Proton acceptor in catalysis. R154 is a binding site for ADP. Residues R162 and 169 to 171 (MGR) each bind substrate. ADP-binding positions include 185–187 (GAE) and 214–216 (KTH). Substrate is bound by residues E223, R244, and 250 to 253 (HIQR).

Belongs to the phosphofructokinase type A (PFKA) family. ATP-dependent PFK group I subfamily. Prokaryotic clade 'B1' sub-subfamily. As to quaternary structure, homotetramer. Requires Mg(2+) as cofactor.

It localises to the cytoplasm. The catalysed reaction is beta-D-fructose 6-phosphate + ATP = beta-D-fructose 1,6-bisphosphate + ADP + H(+). It functions in the pathway carbohydrate degradation; glycolysis; D-glyceraldehyde 3-phosphate and glycerone phosphate from D-glucose: step 3/4. Allosterically activated by ADP and other diphosphonucleosides, and allosterically inhibited by phosphoenolpyruvate. In terms of biological role, catalyzes the phosphorylation of D-fructose 6-phosphate to fructose 1,6-bisphosphate by ATP, the first committing step of glycolysis. In Clostridium botulinum (strain Alaska E43 / Type E3), this protein is ATP-dependent 6-phosphofructokinase.